A 553-amino-acid chain; its full sequence is Solute carrier family 22 member 2 (553 aa).

The Cytoplasmic portion of the chain corresponds to 1 to 21 (MPTVDDILEHIGEFHLFQKQT). The helical transmembrane segment at 22–42 (FFLLALLSGAFTPIYVGIVFL) threads the bilayer. Residues 43-150 (GFTPNHHCRS…LVCAHSWMLD (108 aa)) lie on the Extracellular side of the membrane. N-linked (GlcNAc...) asparagine glycosylation is present at Asn71. A helical membrane pass occupies residues 151-171 (LFQSLVNVGFFIGAVGIGYLA). Residues 172 to 177 (DRFGRK) lie on the Cytoplasmic side of the membrane. A helical transmembrane segment spans residues 178–198 (FCLLVTILINAISGVLMAISP). Residues 199–210 (NYAWMLVFRFLQ) are Extracellular-facing. The chain crosses the membrane as a helical span at residues 211–231 (GLVSKAGWLIGYILITEFVGL). The Cytoplasmic segment spans residues 232-238 (GYRRTVG). A helical membrane pass occupies residues 239–259 (ICYQIAFTVGLLILAGVAYAL). Residues 260–263 (PNWR) are Extracellular-facing. Residues 264 to 284 (WLQFAVTLPNFCFLLYFWCIP) traverse the membrane as a helical segment. The short motif at 284 to 288 (PESPR) is the Proline-rich sequence element. Residues 285 to 348 (ESPRWLISQN…VRTPQIRKHT (64 aa)) are Cytoplasmic-facing. A helical transmembrane segment spans residues 349–369 (LILMYNWFTSSVLYQGLIMHM). Residues 370 to 375 (GLAGDN) are Extracellular-facing. A helical membrane pass occupies residues 376–396 (IYLDFFYSALVEFPAAFIIIL). Over 397 to 404 (TIDRIGRR) the chain is Cytoplasmic. The helical transmembrane segment at 405–425 (YPWAVSNMVAGAACLASVFIP) threads the bilayer. Over 426 to 432 (DDLQWLK) the chain is Extracellular. Residues 433–453 (ITVACLGRMGITIAYEMVCLV) traverse the membrane as a helical segment. The Cytoplasmic segment spans residues 454–464 (NAELYPTYIRN). The helical transmembrane segment at 465-485 (LAVLVCSSMCDIGGIVTPFLV) threads the bilayer. Residues 486–494 (YRLTDIWLE) are Extracellular-facing. The helical transmembrane segment at 495 to 515 (FPLVVFAVVGLVAGGLVLLLP) threads the bilayer. Residues 516–553 (ETKGKALPETIEDAEKMQRPRKKKEKRIYLQVKKAELS) lie on the Cytoplasmic side of the membrane.

The protein belongs to the major facilitator (TC 2.A.1) superfamily. Organic cation transporter (TC 2.A.1.19) family. Tyrosine phosphorylated by tyrosine-protein kinase YES1. Expressed in kidney and ureter. To a lower extent, also expressed in brain and embryo.

Its subcellular location is the basolateral cell membrane. The protein resides in the basal cell membrane. It localises to the apical cell membrane. The enzyme catalyses (R)-noradrenaline(out) = (R)-noradrenaline(in). It carries out the reaction (R)-adrenaline(out) = (R)-adrenaline(in). It catalyses the reaction serotonin(out) = serotonin(in). The catalysed reaction is dopamine(out) = dopamine(in). The enzyme catalyses histamine(out) = histamine(in). It carries out the reaction thiamine(in) = thiamine(out). It catalyses the reaction creatinine(in) = creatinine(out). The catalysed reaction is 1-methylnicotinamide(out) = 1-methylnicotinamide(in). The enzyme catalyses guanidine(out) = guanidine(in). It carries out the reaction choline(out) = choline(in). It catalyses the reaction agmatine(out) = agmatine(in). The catalysed reaction is putrescine(out) = putrescine(in). The enzyme catalyses spermidine(in) = spermidine(out). It carries out the reaction tyramine(in) = tyramine(out). It catalyses the reaction L-histidyl-L-proline diketopiperazine(in) = L-histidyl-L-proline diketopiperazine(out). The catalysed reaction is (R)-salsolinol(in) = (R)-salsolinol(out). The enzyme catalyses N-methyl-(R)-salsolinol(in) = N-methyl-(R)-salsolinol(out). It carries out the reaction acetylcholine(in) = acetylcholine(out). It catalyses the reaction prostaglandin F2alpha(out) = prostaglandin F2alpha(in). The catalysed reaction is prostaglandin E2(out) = prostaglandin E2(in). With respect to regulation, tyrosine phosphorylation of the transporter leads to activation of the transport activity. TEA uptake is activated by tyrosine phosphorylation. Inhibited by cGMP, most likely through a cGMP-binding protein that interacts with OCT2. Functionally, electrogenic voltage-dependent transporter that mediates the transport of a variety of organic cations such as endogenous bioactive amines, cationic drugs and xenobiotics. Functions as a Na(+)-independent, bidirectional uniporter. Cation cellular uptake or release is driven by the electrochemical potential, i.e. membrane potential and concentration gradient. However, may also engage electroneutral cation exchange when saturating concentrations of cation substrates are reached. Predominantly expressed at the basolateral membrane of hepatocytes and proximal tubules and involved in the uptake and disposition of cationic compounds by hepatic and renal clearance from the blood flow. Implicated in monoamine neurotransmitters uptake such as histamine, dopamine, adrenaline/epinephrine, noradrenaline/norepinephrine, serotonin and tyramine, thereby supporting a physiological role in the central nervous system by regulating interstitial concentrations of neurotransmitters. Also capable of transporting dopaminergic neuromodulators cyclo(his-pro), salsolinol and N-methyl-salsolinol, thereby involved in the maintenance of dopaminergic cell integrity in the central nervous system. Mediates the bidirectional transport of acetylcholine (ACh) at the apical membrane of ciliated cell in airway epithelium, thereby playing a role in luminal release of ACh from bronchial epithelium. Also transports guanidine and endogenous monoamines such as vitamin B1/thiamine, creatinine and N-1-methylnicotinamide (NMN). Mediates the uptake and efflux of quaternary ammonium compound choline. Mediates the bidirectional transport of polyamine agmatine and the uptake of polyamines putrescine and spermidine. Able to transport non-amine endogenous compounds such as prostaglandin E2 (PGE2) and prostaglandin F2-alpha (PGF2-alpha). Also involved in the uptake of xenobiotic 4-(4-(dimethylamino)styryl)-N-methylpyridinium (ASP). May contribute to regulate the transport of organic compounds in testis across the blood-testis-barrier. This Mus musculus (Mouse) protein is Solute carrier family 22 member 2.